The chain runs to 70 residues: Melittin (70 aa).

Residues 1–21 form the signal peptide; the sequence is MKFLVNVALVFMVVYISFIYA. A propeptide spans 22-43 (removed by a dipeptidylpeptidase); it reads APEPEPAPEAEAEADAEADPEA. G44 is subject to N-formylglycine; partial. A Glutamine amide modification is found at Q69.

The protein belongs to the melittin family. As to quaternary structure, monomer (in solution and for integration into membranes), homotetramer (in solution and potentially as a toroidal pore in membranes), and potenially homomultimer (as a toroidal pore in membranes). In terms of tissue distribution, expressed by the venom gland.

The protein resides in the secreted. Its subcellular location is the target cell membrane. In terms of biological role, main toxin of bee venom with strong hemolytic activity and antimicrobial activity. It has enhancing effects on bee venom phospholipase A2 activity. This amphipathic toxin binds to negatively charged membrane surface and forms pore by inserting into lipid bilayers inducing the leakage of ions and molecules and the enhancement of permeability that ultimately leads to cell lysis. It acts as a voltage-gated pore with higher selectivity for anions over cations. The ion conductance has been shown to be voltage-dependent. Self-association of melittin in membranes is promoted by high ionic strength, but not by the presence of negatively charged lipids. In vivo, intradermal injection into healthy human volunteers produce sharp pain sensation and an inflammatory response. It produces pain by activating primary nociceptor cells directly and indirectly due to its ability to activate plasma membrane phospholipase A2 and its pore-forming activity. This is Melittin (MELT) from Apis cerana cerana (Oriental honeybee).